The chain runs to 216 residues: 3-isopropylmalate dehydratase small subunit 2 (216 aa).

The protein belongs to the LeuD family. LeuD type 1 subfamily. Heterodimer of LeuC and LeuD.

It catalyses the reaction (2R,3S)-3-isopropylmalate = (2S)-2-isopropylmalate. It functions in the pathway amino-acid biosynthesis; L-leucine biosynthesis; L-leucine from 3-methyl-2-oxobutanoate: step 2/4. In terms of biological role, catalyzes the isomerization between 2-isopropylmalate and 3-isopropylmalate, via the formation of 2-isopropylmaleate. The polypeptide is 3-isopropylmalate dehydratase small subunit 2 (Bordetella pertussis (strain Tohama I / ATCC BAA-589 / NCTC 13251)).